The primary structure comprises 156 residues: Small ribosomal subunit protein uS7 (156 aa).

The protein belongs to the universal ribosomal protein uS7 family. In terms of assembly, part of the 30S ribosomal subunit. Contacts proteins S9 and S11.

One of the primary rRNA binding proteins, it binds directly to 16S rRNA where it nucleates assembly of the head domain of the 30S subunit. Is located at the subunit interface close to the decoding center, probably blocks exit of the E-site tRNA. In Nitratidesulfovibrio vulgaris (strain DSM 19637 / Miyazaki F) (Desulfovibrio vulgaris), this protein is Small ribosomal subunit protein uS7.